We begin with the raw amino-acid sequence, 1296 residues long: Protein STU1 (1296 aa).

4 disordered regions span residues 258-287, 735-793, 888-946, and 953-972; these read ATSA…HGAD, LSQT…PPVT, ALQQ…HISA, and TTSH…TNGV. Polar residues predominate over residues 277–287; that stretch reads RSQFNSSHGAD. Low complexity-rich tracts occupy residues 755 to 782, 900 to 919, and 933 to 946; these read SARS…GAAS, TIST…ASAS, and HSPS…HISA. Polar residues predominate over residues 953 to 964; that stretch reads TTSHRVLSSTPS.

It belongs to the CLASP family. As to quaternary structure, interacts with microtubules.

Its subcellular location is the cytoplasm. The protein localises to the cytoskeleton. It is found in the nucleus. The protein resides in the spindle. Functionally, microtubule binding protein that promotes the stabilization of dynamic microtubules. Required for mitotic spindle formation. This Mycosarcoma maydis (Corn smut fungus) protein is Protein STU1 (STU1).